The sequence spans 157 residues: MFCPFCRHPDSRVIDSRTSDDGLSIRRRRQCPECGRRFSTTETASLSVIKRSGVVEPFSREKIVLGVRKACQGRPVTDSDLAVLAQKVEETIRSTGASQIEANDIGLAILPELRELDEVAYLRFASVYQAFDSLEDFESAIQQLRVEHRGEPADVQV.

Residues 3 to 34 (CPFCRHPDSRVIDSRTSDDGLSIRRRRQCPEC) fold into a zinc finger. The 91-residue stretch at 46–136 (LSVIKRSGVV…VYQAFDSLED (91 aa)) folds into the ATP-cone domain.

The protein belongs to the NrdR family. Zn(2+) is required as a cofactor.

Functionally, negatively regulates transcription of bacterial ribonucleotide reductase nrd genes and operons by binding to NrdR-boxes. This chain is Transcriptional repressor NrdR, found in Leifsonia xyli subsp. xyli (strain CTCB07).